Consider the following 460-residue polypeptide: MSSNQYTAGAVILAAGKGTRMYSDKPKVLQPLLGEPMLRFVYRALDPLFSKAVWTVIGHGADMVRKAFCHEDREFVLQEKQLGTGHALQCAWDKVTASGIDYVLVINGDTPLVRPDSIVRLLDRTAGSGADVGFITLTLEDPAAFGRVVRRHGHVAAVIEAKDYDTAQHGPEPREINAGIYLLKVAAVSPLLPLLTNANASGEYYITDIVELAVRQGLRVEGVECGNDPDLLGVNTPAELMRSEELLRENIVTRHLHNGVHVHAAGSVRIGPDVVIEPGAVIHGPCELYGNTFVGAQAVIDSHCWVKDSRLHPGSTLRNFSHAEQAEIATGAVAGPYARLRPGAVLEQDARMGNFVEMKKAVLRKGAKASHLTYLGDADIGSEANIGAGTITCNYDGVNKHRTVIGEKAFIGSNTALVAPVSIGKQALVGAGSVITKDVEDGELAIARGRQKNLRKTRHS.

The interval 1–237 (MSSNQYTAGA…DPDLLGVNTP (237 aa)) is pyrophosphorylase. UDP-N-acetyl-alpha-D-glucosamine is bound by residues 13-16 (LAAG), lysine 27, glutamine 78, and 83-84 (GT). Residue aspartate 109 participates in Mg(2+) binding. Positions 146, 160, 177, and 235 each coordinate UDP-N-acetyl-alpha-D-glucosamine. Mg(2+) is bound at residue asparagine 235. Positions 238 to 258 (AELMRSEELLRENIVTRHLHN) are linker. An N-acetyltransferase region spans residues 259-460 (GVHVHAAGSV…QKNLRKTRHS (202 aa)). 2 residues coordinate UDP-N-acetyl-alpha-D-glucosamine: arginine 341 and lysine 359. Histidine 371 (proton acceptor) is an active-site residue. UDP-N-acetyl-alpha-D-glucosamine contacts are provided by tyrosine 374 and asparagine 385. Residues alanine 388, 394–395 (NY), serine 413, alanine 431, and arginine 448 contribute to the acetyl-CoA site.

It in the N-terminal section; belongs to the N-acetylglucosamine-1-phosphate uridyltransferase family. In the C-terminal section; belongs to the transferase hexapeptide repeat family. In terms of assembly, homotrimer. It depends on Mg(2+) as a cofactor.

It localises to the cytoplasm. It catalyses the reaction alpha-D-glucosamine 1-phosphate + acetyl-CoA = N-acetyl-alpha-D-glucosamine 1-phosphate + CoA + H(+). It carries out the reaction N-acetyl-alpha-D-glucosamine 1-phosphate + UTP + H(+) = UDP-N-acetyl-alpha-D-glucosamine + diphosphate. It functions in the pathway nucleotide-sugar biosynthesis; UDP-N-acetyl-alpha-D-glucosamine biosynthesis; N-acetyl-alpha-D-glucosamine 1-phosphate from alpha-D-glucosamine 6-phosphate (route II): step 2/2. It participates in nucleotide-sugar biosynthesis; UDP-N-acetyl-alpha-D-glucosamine biosynthesis; UDP-N-acetyl-alpha-D-glucosamine from N-acetyl-alpha-D-glucosamine 1-phosphate: step 1/1. The protein operates within bacterial outer membrane biogenesis; LPS lipid A biosynthesis. Catalyzes the last two sequential reactions in the de novo biosynthetic pathway for UDP-N-acetylglucosamine (UDP-GlcNAc). The C-terminal domain catalyzes the transfer of acetyl group from acetyl coenzyme A to glucosamine-1-phosphate (GlcN-1-P) to produce N-acetylglucosamine-1-phosphate (GlcNAc-1-P), which is converted into UDP-GlcNAc by the transfer of uridine 5-monophosphate (from uridine 5-triphosphate), a reaction catalyzed by the N-terminal domain. The protein is Bifunctional protein GlmU of Oleidesulfovibrio alaskensis (strain ATCC BAA-1058 / DSM 17464 / G20) (Desulfovibrio alaskensis).